We begin with the raw amino-acid sequence, 487 residues long: Fatty acid desaturase 2-like protein FADS2B (487 aa).

The span at 1–11 (MKLEEKLEHNE) shows a compositional bias: basic and acidic residues. Residues 1–20 (MKLEEKLEHNESLVGKSRPC) form a disordered region. The Cytoplasmic portion of the chain corresponds to 1–175 (MKLEEKLEHN…AMNMFSANLR (175 aa)). A Cytochrome b5 heme-binding domain is found at 62-139 (LNLYTWQEIQ…LKPLLIGELS (78 aa)). 2 residues coordinate heme: His97 and His120. The chain crosses the membrane as a helical span at residues 176 to 196 (FFFLHLAQILILEISAWLILH). Topologically, residues 197–201 (HFGSS) are lumenal. The helical transmembrane segment at 202–222 (WLVTILISFLLTVSQAQCSFL) threads the bilayer. Residues 223–307 (QHDLGHLSMF…IKYIDYEKQH (85 aa)) lie on the Cytoplasmic side of the membrane. The Histidine box-1 signature appears at 224 to 228 (HDLGH). Residues 261-265 (HFQHH) carry the Histidine box-2 motif. The helical transmembrane segment at 308–328 (LYFYMVALPFLMPVYFNLQSM) threads the bilayer. Topologically, residues 329-349 (QVMYLRKYWMDIAWVSSFYIR) are lumenal. A helical transmembrane segment spans residues 350-370 (YFITFGPFYGIFGTVLLIYLV). Residues 371 to 487 (KFIESPWIAY…ASLWMNAYYE (117 aa)) are Cytoplasmic-facing. The short motif at 426 to 430 (QIEHH) is the Histidine box-3 element.

This sequence belongs to the fatty acid desaturase type 1 family.

The protein resides in the endoplasmic reticulum membrane. It participates in lipid metabolism; polyunsaturated fatty acid biosynthesis. In Mus musculus (Mouse), this protein is Fatty acid desaturase 2-like protein FADS2B.